Reading from the N-terminus, the 419-residue chain is Mitogen-activated protein kinase pmk-2 (419 aa).

Residues 49-350 (YNSLKPLGEG…VSSALRHDYL (302 aa)) form the Protein kinase domain. Residues 55 to 63 (LGEGAYGVV) and lysine 78 each bind ATP. The active-site Proton acceptor is aspartate 210. Threonine 222 is modified (phosphothreonine). Residues 222–224 (TGY) carry the TXY motif. Residue tyrosine 224 is modified to Phosphotyrosine.

Belongs to the protein kinase superfamily. CMGC Ser/Thr protein kinase family. MAP kinase subfamily. It depends on Mg(2+) as a cofactor. In terms of processing, dually phosphorylated on Thr-222 and Tyr-224, which activates the enzyme.

The protein resides in the cytoplasm. The catalysed reaction is L-seryl-[protein] + ATP = O-phospho-L-seryl-[protein] + ADP + H(+). It carries out the reaction L-threonyl-[protein] + ATP = O-phospho-L-threonyl-[protein] + ADP + H(+). Its activity is regulated as follows. Activated by phosphorylation on threonine and tyrosine. Inhibited by pyridinyl-imidazole related compounds. Functionally, responds to activation by environmental stress and pro-inflammatory cytokines by phosphorylating downstream targets. This chain is Mitogen-activated protein kinase pmk-2 (pmk-2), found in Caenorhabditis elegans.